Consider the following 288-residue polypeptide: MLTRIALFLATNFAVLILASIVMSLLGVNPSQMSGLLVMAAIFGFGGSFISLLLSKWMAKRSTGAVVITEPRNQTERWLLATVERQAKAAGIGMPEVAVYEGPEINAFATGANRNNALVAVSTGLLHNMSEDEAEAVLGHEIAHVANGDMITMALLQGVLNTFVIVLARVVGGIIDSALSGNREGGGRGFAYYIIVFVLEMVFGLFATMISMWFSRHREFRADAGGASLAGRQKMIAALERLQLNHGQSTLPTQIAAFGIAGSTAKKLFMSHPPLEERIAALRASTVA.

Transmembrane regions (helical) follow at residues 5–25 and 35–55; these read IALFLATNFAVLILASIVMSL and GLLVMAAIFGFGGSFISLLLS. Position 140 (His-140) interacts with Zn(2+). Glu-141 is a catalytic residue. His-144 is a Zn(2+) binding site. Helical transmembrane passes span 155 to 175 and 194 to 214; these read LLQGVLNTFVIVLARVVGGII and IIVFVLEMVFGLFATMISMWF. Glu-219 is a Zn(2+) binding site.

The protein belongs to the peptidase M48B family. Zn(2+) is required as a cofactor.

Its subcellular location is the cell inner membrane. The sequence is that of Protease HtpX from Stenotrophomonas maltophilia (strain K279a).